Reading from the N-terminus, the 311-residue chain is Transmembrane protein 177 (311 aa).

Residues M1–T17 lie on the Mitochondrial matrix side of the membrane. The chain crosses the membrane as a helical span at residues G18–P38. Residues D39–T166 are Mitochondrial intermembrane-facing. Residues A167–A187 form a helical membrane-spanning segment. At K188–P197 the chain is on the mitochondrial matrix side. A helical membrane pass occupies residues M198–F218. Residues S219 to S311 lie on the Mitochondrial intermembrane side of the membrane.

The protein belongs to the TMEM177 family. Found in a complex with COX20, COA6, MT-CO2/COX2, COX18, SCO1 and SCO2. Interacts with COX20. Interacts with COX1, MT-CO2/COX2, SCO1 and SCO2 in a COX20-dependent manner.

The protein resides in the mitochondrion inner membrane. Its function is as follows. Plays a role in the early steps of cytochrome c oxidase subunit II (MT-CO2/COX2) maturation and is required for the stabilization of COX20 and the newly synthesized MT-CO2/COX2 protein. The polypeptide is Transmembrane protein 177 (TMEM177) (Homo sapiens (Human)).